The chain runs to 438 residues: Aspartic proteinase nepenthesin-2 (438 aa).

The signal sequence occupies residues 1–24 (MASPLYSVVLGLAIVSAIVAPTSS). Positions 25–79 (TSRGTLLHHGQKRPQPGLRVDLEQVDSGKNLTKYELIKRAIKRGERRMRSINAML) are cleaved as a propeptide — activation peptide. N-linked (GlcNAc...) asparagine glycosylation occurs at asparagine 54. Residues 96-431 (YLMNVAIGTP…DLQNLAVSFV (336 aa)) form the Peptidase A1 domain. Aspartate 114 is a catalytic residue. 6 cysteine pairs are disulfide-bonded: cysteine 124-cysteine 127, cysteine 130-cysteine 204, cysteine 151-cysteine 169, cysteine 156-cysteine 164, cysteine 241-cysteine 435, and cysteine 354-cysteine 395. Aspartate 315 is an active-site residue.

It belongs to the peptidase A1 family.

It is found in the secreted. The enzyme catalyses Similar to pepsin, but also cleaves on either side of Asp and at Lys-|-Arg.. Its activity is regulated as follows. Inhibited by pepstatin and by diazoacetyl-D,L-norleucine methyl ester (DAN) in the presence of Cu(2+) ions. Its function is as follows. Extracellular proteinase found in the pitcher fluid of carnivorous plants. Digest prey for nitrogen uptake. The sequence is that of Aspartic proteinase nepenthesin-2 (nep2) from Nepenthes gracilis (Slender pitcher plant).